A 1612-amino-acid polypeptide reads, in one-letter code: Replicase large subunit (1612 aa).

The segment at 52–466 (RSISEEQTLI…FLQTKLAMLK (415 aa)) is methyltransferase. The 209-residue stretch at 72–280 (TFYNTQNAVH…HSYSNVLKYV (209 aa)) folds into the Alphavirus-like MT domain. The (+)RNA virus helicase ATP-binding domain maps to 803–964 (LVYSDMGKIR…QLEVDAVETR (162 aa)). Residues 831 to 1086 (TLVDGVPGCG…RHTRSIKYYT (256 aa)) form a helicase region. Residues 838 to 843 (GCGKTK), Arg-870, 968 to 969 (LR), Arg-1077, and 1098 to 1101 (DLEC) each bind ATP. The region spanning 965–1117 (RTTLRCPADI…DMYKVDVSTQ (153 aa)) is the (+)RNA virus helicase C-terminal domain. A RdRp catalytic domain is found at 1380-1493 (MDILELDISK…YFPKGTDFPD (114 aa)).

The protein belongs to the ssRNA positive-strand viruses RNA-directed RNA polymerase family. As to quaternary structure, heterodimer of a large and a small subunit. Both large and small subunits interact, via an ATP bridge, with host protein Tm-1 (e.g. tomato Tm-1 AC A7M6E7 and AC A7M6E8).

The enzyme catalyses RNA(n) + a ribonucleoside 5'-triphosphate = RNA(n+1) + diphosphate. It carries out the reaction ATP + H2O = ADP + phosphate + H(+). With respect to regulation, in resistant plants, is bound by host protein Tm-1 (e.g. tomato Tm-1 AC A7M6E7), thereby inhibiting replication complex activity. Its function is as follows. Is an RNA-dependent RNA polymerase active in viral RNA replication. Functionally, is a methyltransferase active in RNA capping and an RNA helicase. Methyltransferase displays a cytoplasmic capping enzyme activity. This function is necessary since all viral RNAs are synthesized in the cytoplasm, and host capping enzymes are restricted to the nucleus. Helicase region probably exhibits NTPase and RNA unwinding activities (Potential). It also acts as a suppressor of RNA-mediated gene silencing, also known as post-transcriptional gene silencing (PTGS), a mechanism of plant viral defense that limits the accumulation of viral RNAs. May mediate silencing suppression through either inhibition of HEN1-mediated siRNA or siRNA demethylation. This Pepper mild mottle virus (strain Japan) (PMMV-J) protein is Replicase large subunit.